The following is a 346-amino-acid chain: Phosphoribosylformylglycinamidine cyclo-ligase (346 aa).

This sequence belongs to the AIR synthase family.

It localises to the cytoplasm. It carries out the reaction 2-formamido-N(1)-(5-O-phospho-beta-D-ribosyl)acetamidine + ATP = 5-amino-1-(5-phospho-beta-D-ribosyl)imidazole + ADP + phosphate + H(+). Its pathway is purine metabolism; IMP biosynthesis via de novo pathway; 5-amino-1-(5-phospho-D-ribosyl)imidazole from N(2)-formyl-N(1)-(5-phospho-D-ribosyl)glycinamide: step 2/2. This chain is Phosphoribosylformylglycinamidine cyclo-ligase, found in Vibrio vulnificus (strain YJ016).